Reading from the N-terminus, the 380-residue chain is Cytochrome b (380 aa).

The next 4 helical transmembrane spans lie at 33-53, 77-98, 113-133, and 178-198; these read FGSL…FLAM, WLIR…YFHI, WNIG…GYVL, and FFAF…LHLL. Positions 83 and 97 each coordinate heme b. Positions 182 and 196 each coordinate heme b. Residue H201 participates in a ubiquinone binding. The next 4 helical transmembrane spans lie at 226–246, 288–308, 320–340, and 347–367; these read YKDL…ALFS, LGGV…PFLH, VSQF…WIGG, and FIII…VFFP.

This sequence belongs to the cytochrome b family. The cytochrome bc1 complex contains 3 respiratory subunits (MT-CYB, CYC1 and UQCRFS1), 2 core proteins (UQCRC1 and UQCRC2) and probably 6 low-molecular weight proteins. Requires heme b as cofactor.

Its subcellular location is the mitochondrion inner membrane. Functionally, component of the ubiquinol-cytochrome c reductase complex (complex III or cytochrome b-c1 complex) that is part of the mitochondrial respiratory chain. The b-c1 complex mediates electron transfer from ubiquinol to cytochrome c. Contributes to the generation of a proton gradient across the mitochondrial membrane that is then used for ATP synthesis. The polypeptide is Cytochrome b (mt-cyb) (Sarda sarda (Atlantic bonito)).